The following is an 841-amino-acid chain: MLRLPLVLVWSLWASLTVAENGLNGWLRYAPIPCDGRCHKALPSRIVALNSTQGSPLETAIEELQTGVRGMTGKRLSVAKENNCNLHATALIATVEEYRRTCRNSSDIPDLDVDGFWLRTEGNNVQILGQSERGALYGAFEYLSMLAQGDFSSVDYSTSPHAPVRWVNQWDNMDGSIERGYAGPSIFFAQGQIVPDLSRAKQYARLLASVRINGIIVNNVNANATLLTPQNMDGLARIANVFRPYGIRIGIALNFASPDTLGGLGTYDPLDPSVISWWGNITDSLYERIPDMAGYLVKASSEGQPGPDTYNRTLADGANLFARALKPHGGVMMFRAFVYDHHINESIWTNDRANAQVDFFKKLDGQFEDNVIVQIKYGPIDFQVREPVSPLFANLYHTNTAIELQVTQEYLGQQCHLVYLPPLWKTITDFDLRVDHSPSVVRDIISGERFNRPLGGWAAVVNVGTNDTWLGSHLSMSNLYAYGRMAWSPTDDSVEILQDWIRLTFGRDQHVLDTITDMSMASWPAYENYTGNLGIQTLTDILYTHYGPNPASQDGNGWGQWTRADHDSIGMDRTVKNGTGNAGQYPAEIAEIYEDIDKTPDDLLLWFHHVPYTHRLDSGKTVIQHFYDAHYAGAETAQGFVPQWESLRGRIDPERYDAMRTRLVYQAGHSIVWRDAINNFYWNLSGIADTNGRVGHHPWRVEAESMQLQGYQPYAVSPFETASNYTAVVTTSNSTTGTASTTLDFPSGTYDVGVNYFDMYGGKSRWSLYLNDKVVGKWEGNSEDVLGHTPSIYLDGHSAIRITFNGVKVRKGDRLKIVGVPDGVEPAPLDYVVFLPQGVID.

A signal peptide spans Met-1–Ala-19. Asn-50, Asn-104, Asn-223, Asn-280, Asn-311, Asn-344, Asn-466, Asn-528, Asn-577, Asn-683, Asn-724, and Asn-733 each carry an N-linked (GlcNAc...) asparagine glycan.

This sequence belongs to the glycosyl hydrolase 67 family.

The protein resides in the secreted. It catalyses the reaction an alpha-D-glucuronoside + H2O = D-glucuronate + an alcohol. In terms of biological role, alpha-glucuronidase involved in the hydrolysis of xylan, a major structural heterogeneous polysaccharide found in plant biomass representing the second most abundant polysaccharide in the biosphere, after cellulose. Releases 4-O-methylglucuronic acid from xylan. In Aspergillus terreus (strain NIH 2624 / FGSC A1156), this protein is Probable alpha-glucuronidase A (aguA).